The primary structure comprises 238 residues: Transcriptional activator HAC1 (238 aa).

The disordered stretch occupies residues 1 to 39 (MEMTDFELTSNSQSNLAIPTNFKSTLPPRKRAKTKEEKE). Residues 7–24 (ELTSNSQSNLAIPTNFKS) are compositionally biased toward polar residues. The bZIP domain occupies 39–102 (EQRRIERILR…LTCSHDAFVA (64 aa)). The basic motif stretch occupies residues 41-61 (RRIERILRNRRAAHQSREKKR). The tract at residues 67-74 (LERKCSLL) is leucine-zipper. The interval 115 to 152 (GASLDTRASSHSSSDTFTPSPLNCTMEPATLSPKSMRD) is disordered. The segment covering 117-134 (SLDTRASSHSSSDTFTPS) has biased composition (low complexity).

It belongs to the bZIP family. In terms of assembly, homodimer.

The protein localises to the nucleus. Its function is as follows. Transcriptional activator involved in the unfolded protein response (UPR) pathway. Recognizes and binds to the UPR element (UPRE) in the promoter of UPR-regulated genes such as KAR2, PDI1, EUG1 and FKB2. Increases the synthesis of endoplasmic reticulum-resident proteins required for protein folding as well as components of the secretory pathway. The protein is Transcriptional activator HAC1 (HAC1) of Saccharomyces cerevisiae (strain ATCC 204508 / S288c) (Baker's yeast).